A 488-amino-acid chain; its full sequence is E3 ubiquitin-protein ligase RNF8 (488 aa).

Residues Val-38–Leu-92 enclose the FHA domain. Positions Gln-68–Gly-72 are required for interaction with PIWIL1. A disordered region spans residues Asp-141–Leu-164. Basic residues predominate over residues Glu-145–Phe-156. Residue Ser-157 is modified to Phosphoserine. The RING-type zinc finger occupies Cys-406 to Arg-444.

It belongs to the RNF8 family. As to quaternary structure, homodimer. Forms a E2-E3 ubiquitin ligase complex composed of the RNF8 homodimer and a E2 heterodimer of UBE2N and UBE2V2. Interacts with class III E2s, including UBE2E1, UBE2E2, and UBE2E3 and with UBE2N. Interacts with RXRA. Interacts (via FHA domain) with ATM-phosphorylated MDC1. Interacts (via FHA domain) with 'Thr-4829' phosphorylated HERC2 (via C-terminus). Interacts with PIWIL1; leading to sequester RNF8 in the cytoplasm. Interacts with WRAP53/TCAB1. In terms of assembly, (Microbial infection) May interact with the L.monocytogenes protein actA; however, given these errors in the sequence (AJ242721), the relevance of the interaction with actA remains to be confirmed. Post-translationally, autoubiquitinated through 'Lys-48' and 'Lys-63' of ubiquitin. 'Lys-63' polyubiquitination is mediated by UBE2N. 'Lys-29'-type polyubiquitination is also observed, but it doesn't require its own functional RING-type zinc finger.

It is found in the nucleus. The protein localises to the cytoplasm. The protein resides in the midbody. It localises to the chromosome. Its subcellular location is the telomere. It catalyses the reaction S-ubiquitinyl-[E2 ubiquitin-conjugating enzyme]-L-cysteine + [acceptor protein]-L-lysine = [E2 ubiquitin-conjugating enzyme]-L-cysteine + N(6)-ubiquitinyl-[acceptor protein]-L-lysine.. Its pathway is protein modification; protein ubiquitination. Functionally, E3 ubiquitin-protein ligase that plays a key role in DNA damage signaling via 2 distinct roles: by mediating the 'Lys-63'-linked ubiquitination of histones H2A and H2AX and promoting the recruitment of DNA repair proteins at double-strand breaks (DSBs) sites, and by catalyzing 'Lys-48'-linked ubiquitination to remove target proteins from DNA damage sites. Following DNA DSBs, it is recruited to the sites of damage by ATM-phosphorylated MDC1 and catalyzes the 'Lys-63'-linked ubiquitination of histones H2A and H2AX, thereby promoting the formation of TP53BP1 and BRCA1 ionizing radiation-induced foci (IRIF). Also controls the recruitment of UIMC1-BRCC3 (RAP80-BRCC36) and PAXIP1/PTIP to DNA damage sites. Promotes the recruitment of NBN to DNA damage sites by catalyzing 'Lys-6'-linked ubiquitination of NBN. Also recruited at DNA interstrand cross-links (ICLs) sites and catalyzes 'Lys-63'-linked ubiquitination of histones H2A and H2AX, leading to recruitment of FAAP20 and Fanconi anemia (FA) complex, followed by interstrand cross-link repair. H2A ubiquitination also mediates the ATM-dependent transcriptional silencing at regions flanking DSBs in cis, a mechanism to avoid collision between transcription and repair intermediates. Promotes the formation of 'Lys-63'-linked polyubiquitin chains via interactions with the specific ubiquitin-conjugating UBE2N/UBC13 and ubiquitinates non-histone substrates such as PCNA. Substrates that are polyubiquitinated at 'Lys-63' are usually not targeted for degradation. Also catalyzes the formation of 'Lys-48'-linked polyubiquitin chains via interaction with the ubiquitin-conjugating UBE2L6/UBCH8, leading to degradation of substrate proteins such as CHEK2, JMJD2A/KDM4A and KU80/XRCC5: it is still unclear how the preference toward 'Lys-48'- versus 'Lys-63'-linked ubiquitination is regulated but it could be due to RNF8 ability to interact with specific E2 specific ligases. For instance, interaction with phosphorylated HERC2 promotes the association between RNF8 and UBE2N/UBC13 and favors the specific formation of 'Lys-63'-linked ubiquitin chains. Promotes non-homologous end joining (NHEJ) by promoting the 'Lys-48'-linked ubiquitination and degradation the of KU80/XRCC5. Following DNA damage, mediates the ubiquitination and degradation of JMJD2A/KDM4A in collaboration with RNF168, leading to unmask H4K20me2 mark and promote the recruitment of TP53BP1 at DNA damage sites. Following DNA damage, mediates the ubiquitination and degradation of POLD4/p12, a subunit of DNA polymerase delta. In the absence of POLD4, DNA polymerase delta complex exhibits higher proofreading activity. In addition to its function in damage signaling, also plays a role in higher-order chromatin structure by mediating extensive chromatin decondensation. Involved in the activation of ATM by promoting histone H2B ubiquitination, which indirectly triggers histone H4 'Lys-16' acetylation (H4K16ac), establishing a chromatin environment that promotes efficient activation of ATM kinase. Required in the testis, where it plays a role in the replacement of histones during spermatogenesis. At uncapped telomeres, promotes the joining of deprotected chromosome ends by inducing H2A ubiquitination and TP53BP1 recruitment, suggesting that it may enhance cancer development by aggravating telomere-induced genome instability in case of telomeric crisis. Promotes the assembly of RAD51 at DNA DSBs in the absence of BRCA1 and TP53BP1 Also involved in class switch recombination in immune system, via its role in regulation of DSBs repair. May be required for proper exit from mitosis after spindle checkpoint activation and may regulate cytokinesis. May play a role in the regulation of RXRA-mediated transcriptional activity. Not involved in RXRA ubiquitination by UBE2E2. This chain is E3 ubiquitin-protein ligase RNF8, found in Mus musculus (Mouse).